We begin with the raw amino-acid sequence, 188 residues long: Single-stranded DNA-binding protein DdrB (188 aa).

The segment at 140 to 188 (YAVPGGAAGNGQGRPAPQGQPAQARPQATAARPAARPPVQPGQEEETPF) is disordered. The segment covering 152–173 (GRPAPQGQPAQARPQATAARPA) has biased composition (low complexity).

Homopentamer arranged in a ring-structure; DNA binds between subunits and along the top of the ring. The pentamers self-associate to coat ssDNA in higher-ordered structures; oligomerization facilitates the assembly of extended nucleoprotein complexes. Self-assembly does not however require ssDNA-binding. Interacts with SSB.

Functionally, ssDNA-binding protein that contributes to the ionizing radiation resistance of D.radiodurans. Plays a role in DNA repair and genome reconstitution in a RecA-independent process. Required for recovery from severe genomic fragmentation as a result of exposure to severe levels of ionizing radiation. Binds ssDNA but not dsDNA. Stimulates annealing of complementary ssDNA. Does not complement an ssb disruption. In Deinococcus radiodurans (strain ATCC 13939 / DSM 20539 / JCM 16871 / CCUG 27074 / LMG 4051 / NBRC 15346 / NCIMB 9279 / VKM B-1422 / R1), this protein is Single-stranded DNA-binding protein DdrB (ddrB).